The following is a 388-amino-acid chain: Dual-specificity RNA methyltransferase RlmN (388 aa).

Residue Glu109 is the Proton acceptor of the active site. A Radical SAM core domain is found at 115 to 354 (EEDRATLCVS…TIVRKTRGDD (240 aa)). Cys122 and Cys359 are joined by a disulfide. [4Fe-4S] cluster-binding residues include Cys129, Cys133, and Cys136. Residues 183 to 184 (GE), Ser215, 237 to 239 (SLH), and Asn316 each bind S-adenosyl-L-methionine. The S-methylcysteine intermediate role is filled by Cys359.

This sequence belongs to the radical SAM superfamily. RlmN family. The cofactor is [4Fe-4S] cluster.

It is found in the cytoplasm. The enzyme catalyses adenosine(2503) in 23S rRNA + 2 reduced [2Fe-2S]-[ferredoxin] + 2 S-adenosyl-L-methionine = 2-methyladenosine(2503) in 23S rRNA + 5'-deoxyadenosine + L-methionine + 2 oxidized [2Fe-2S]-[ferredoxin] + S-adenosyl-L-homocysteine. It carries out the reaction adenosine(37) in tRNA + 2 reduced [2Fe-2S]-[ferredoxin] + 2 S-adenosyl-L-methionine = 2-methyladenosine(37) in tRNA + 5'-deoxyadenosine + L-methionine + 2 oxidized [2Fe-2S]-[ferredoxin] + S-adenosyl-L-homocysteine. In terms of biological role, specifically methylates position 2 of adenine 2503 in 23S rRNA and position 2 of adenine 37 in tRNAs. m2A2503 modification seems to play a crucial role in the proofreading step occurring at the peptidyl transferase center and thus would serve to optimize ribosomal fidelity. In Klebsiella pneumoniae subsp. pneumoniae (strain ATCC 700721 / MGH 78578), this protein is Dual-specificity RNA methyltransferase RlmN.